Reading from the N-terminus, the 269-residue chain is Phosphate import ATP-binding protein PstB (269 aa).

Positions 22 to 264 (IKVKNVDFFY…PANKKTEDYI (243 aa)) constitute an ABC transporter domain. 55–62 (GSSGSGKS) contacts ATP.

This sequence belongs to the ABC transporter superfamily. Phosphate importer (TC 3.A.1.7) family. In terms of assembly, the complex is composed of two ATP-binding proteins (PstB), two transmembrane proteins (PstC and PstA) and a solute-binding protein (PstS).

The protein localises to the cell membrane. The catalysed reaction is phosphate(out) + ATP + H2O = ADP + 2 phosphate(in) + H(+). Part of the ABC transporter complex PstSACB involved in phosphate import. Responsible for energy coupling to the transport system. The polypeptide is Phosphate import ATP-binding protein PstB (Spiroplasma kunkelii).